The chain runs to 115 residues: Large ribosomal subunit protein bL19 (115 aa).

This sequence belongs to the bacterial ribosomal protein bL19 family.

In terms of biological role, this protein is located at the 30S-50S ribosomal subunit interface and may play a role in the structure and function of the aminoacyl-tRNA binding site. This Streptococcus pyogenes serotype M49 (strain NZ131) protein is Large ribosomal subunit protein bL19.